A 973-amino-acid chain; its full sequence is FHF complex subunit HOOK-interacting protein 1B (973 aa).

3 disordered regions span residues 466–493, 510–547, and 573–647; these read SSPSRPEHASWARGPGSPSVDSSSVVTV, SLGGSESPAPAPRSPGLATSPASSPGRRPSPVEEPGEL, and SAPY…EGAK. A Phosphoserine modification is found at S467. Residues 482 to 493 show a composition bias toward low complexity; the sequence is SPSVDSSSVVTV. Phosphoserine occurs at positions 510, 523, 529, and 533. Low complexity-rich tracts occupy residues 529–538 and 622–639; these read SPASSPGRRP and GARESLGHLPPPQLNGLP. A phosphoserine mark is found at S859 and S898.

This sequence belongs to the FHIP family. In terms of assembly, component of the FTS/Hook/FHIP complex (FHF complex), composed of AKTIP/FTS, FHIP1B, and one or more members of the Hook family of proteins HOOK1, HOOK2, and HOOK3. The FHF complex associates with the homotypic vesicular sorting complex (the HOPS complex).

Component of the FTS/Hook/FHIP complex (FHF complex). The FHF complex may function to promote vesicle trafficking and/or fusion via the homotypic vesicular protein sorting complex (the HOPS complex). FHF complex promotes the distribution of AP-4 complex to the perinuclear area of the cell. In Bos taurus (Bovine), this protein is FHF complex subunit HOOK-interacting protein 1B (FHIP1B).